The sequence spans 25 residues: Alanine racemase (25 aa).

This sequence belongs to the alanine racemase family. In terms of assembly, homodimer. Requires pyridoxal 5'-phosphate as cofactor.

It carries out the reaction L-alanine = D-alanine. The protein operates within amino-acid biosynthesis; D-alanine biosynthesis; D-alanine from L-alanine: step 1/1. Functionally, catalyzes the interconversion of L-alanine and D-alanine. The polypeptide is Alanine racemase (Pseudomonas fluorescens).